Consider the following 270-residue polypeptide: Sulfur carrier protein FdhD (270 aa).

Cysteine 116 acts as the Cysteine persulfide intermediate in catalysis. 253-258 (FAREGK) serves as a coordination point for Mo-bis(molybdopterin guanine dinucleotide).

This sequence belongs to the FdhD family.

It is found in the cytoplasm. In terms of biological role, required for formate dehydrogenase (FDH) activity. Acts as a sulfur carrier protein that transfers sulfur from IscS to the molybdenum cofactor prior to its insertion into FDH. The protein is Sulfur carrier protein FdhD of Haemophilus influenzae (strain ATCC 51907 / DSM 11121 / KW20 / Rd).